A 373-amino-acid chain; its full sequence is MNAPVKILNPVGLLAELTHRCPLACPYCSNPLELDSRAAELDTAAWIKVFTEAAELGVLHAHLSGGEPAARRDLVEIVAHCASVGLYTNLITSGIGLTQERIKALADAGLDHVQLSIQDAEAKSADHIAGYEGAFARKQSVAAWVTAAGLPLTVNAVIHRANAERAGQMVKLAVALGARRVEIAHTQYYGWGIVNRAALMPTKAQADAAIAEVEALREVYAGVIVIDHVIPDYHARHPKACMGGWAKRTLNVTPTGKVLPCHAAETIPGLEFWNVRDHSLRDVWFASPAFNAFRGTEWMKEPCRSCPRKEIDFGGCRCQAFALTGDANAADPVCHLSPDHDKVAAIAAHANEEEAATEIAYVYRGVKAPVPAE.

Residues 7–227 (ILNPVGLLAE…EVYAGVIVID (221 aa)) enclose the Radical SAM core domain. [4Fe-4S] cluster is bound by residues cysteine 21, cysteine 25, and cysteine 28.

It belongs to the radical SAM superfamily. PqqE family. In terms of assembly, interacts with PqqD. The interaction is necessary for activity of PqqE. [4Fe-4S] cluster is required as a cofactor.

It carries out the reaction [PQQ precursor protein] + S-adenosyl-L-methionine = E-Y cross-linked-[PQQ precursor protein] + 5'-deoxyadenosine + L-methionine + H(+). The protein operates within cofactor biosynthesis; pyrroloquinoline quinone biosynthesis. In terms of biological role, catalyzes the cross-linking of a glutamate residue and a tyrosine residue in the PqqA protein as part of the biosynthesis of pyrroloquinoline quinone (PQQ). The polypeptide is PqqA peptide cyclase (Methylocella silvestris (strain DSM 15510 / CIP 108128 / LMG 27833 / NCIMB 13906 / BL2)).